A 1252-amino-acid polypeptide reads, in one-letter code: Elongator complex protein 1 (1252 aa).

Residues 814-1252 (VDVNDLYNVA…MMDWQHEILQ (439 aa)) are mediates dimerization. Residue serine 1094 is modified to Phosphoserine. Residues 1097-1116 (SSQYSGTSRRTGKTFRSSKN) form a disordered region. Basic residues predominate over residues 1106–1116 (RTGKTFRSSKN). Positions 1111–1129 (FRSSKNRRKHERKLFSLKP) are required for binding to tRNA.

Belongs to the ELP1/IKA1 family. As to quaternary structure, homodimer. Component of the elongator complex composed of Elp1, Elp2, Elp3, Elp4, Elp5 and Elp6. The elongator complex associates with and stabilizes microtubules; efficient interaction requires the full complex.

It is found in the cytoplasm. Its subcellular location is the nucleus. The protein resides in the cytoskeleton. It localises to the spindle. It functions in the pathway tRNA modification; 5-methoxycarbonylmethyl-2-thiouridine-tRNA biosynthesis. Its function is as follows. Component of the elongator complex, which is required for multiple tRNA modifications, including mcm5U (5-methoxycarbonylmethyl uridine), mcm5s2U (5-methoxycarbonylmethyl-2-thiouridine), and ncm5U (5-carbamoylmethyl uridine). The elongator complex catalyzes formation of carboxymethyluridine in the wobble base at position 34 in tRNAs. ELP1 binds to tRNA, mediating interaction of the elongator complex with tRNA. Binding by the elongator complex stabilizes microtubules and promotes their growth. This induces central spindle asymmetry, promoting polarized signaling endosome trafficking during asymmetric cell division and cell fate assignation of sensory organ precursor cells. Involved in protein synthesis-dependent long-term memory formation, probably as part of the elongator complex. This Drosophila melanogaster (Fruit fly) protein is Elongator complex protein 1.